The chain runs to 175 residues: MSRVAKKPVSLPKGVELNVQPELISVKGPKGTLTLQKPVGVEIAIDGDVATLSANDPSQIAITGTVRAILANMIKGVSEGFERKLELVGVGYRAAMQGKDLSLALGFSHPLVFVAPEGITLSTPTQTEILVQGADKQRVGEVAAKIRGFRPPEPYKGKGVKYAGEVIIRKEAKKA.

The protein belongs to the universal ribosomal protein uL6 family. In terms of assembly, part of the 50S ribosomal subunit.

This protein binds to the 23S rRNA, and is important in its secondary structure. It is located near the subunit interface in the base of the L7/L12 stalk, and near the tRNA binding site of the peptidyltransferase center. The sequence is that of Large ribosomal subunit protein uL6 from Xanthomonas campestris pv. campestris (strain 8004).